Here is a 256-residue protein sequence, read N- to C-terminus: Homeobox-leucine zipper protein HOX18 (256 aa).

Positions 52–116 (YDHGRDEEQA…GGGGGGTRKK (65 aa)) are disordered. The span at 102-112 (DGGSGGGGGGG) shows a compositional bias: gly residues. The segment at residues 112–171 (GTRKKLQLTKEQSTLLEDSFRVHNILSHAQKHELARQLKLKPRQVEVWFQNRRARTKLKQ) is a DNA-binding region (homeobox). The segment at 170–214 (KQTEVDCEFLKRCCESLTEENKQLKHELMELRRLASPAAAAAGSQ) is leucine-zipper.

This sequence belongs to the HD-ZIP homeobox family. Class II subfamily. In terms of tissue distribution, expressed in roots, leaf sheaths and blades and panicles.

The protein localises to the nucleus. In terms of biological role, probable transcription factor. In Oryza sativa subsp. japonica (Rice), this protein is Homeobox-leucine zipper protein HOX18 (HOX18).